We begin with the raw amino-acid sequence, 201 residues long: Small ribosomal subunit protein uS4 (201 aa).

The S4 RNA-binding domain maps to 93–153; sequence QRLDNIVYRL…EKSKNLVIIK (61 aa).

It belongs to the universal ribosomal protein uS4 family. As to quaternary structure, part of the 30S ribosomal subunit. Contacts protein S5. The interaction surface between S4 and S5 is involved in control of translational fidelity.

Its function is as follows. One of the primary rRNA binding proteins, it binds directly to 16S rRNA where it nucleates assembly of the body of the 30S subunit. In terms of biological role, with S5 and S12 plays an important role in translational accuracy. The polypeptide is Small ribosomal subunit protein uS4 (Latilactobacillus sakei subsp. sakei (strain 23K) (Lactobacillus sakei subsp. sakei)).